The primary structure comprises 26 residues: Orexigenic neuropeptide 26RFa (26 aa).

Position 26 is a phenylalanine amide (F26).

In terms of tissue distribution, brain.

Its subcellular location is the secreted. Its function is as follows. May have orexigenic activity. May promote aldosterone secretion by the adrenal gland. The polypeptide is Orexigenic neuropeptide 26RFa (Pelophylax lessonae (Pool frog)).